A 252-amino-acid polypeptide reads, in one-letter code: Geranylgeranylglyceryl phosphate synthase (252 aa).

Residues D26 and S55 each coordinate Mg(2+). Residues 174–180 (YLEAGSG), 205–206 (GG), and 227–228 (GT) each bind sn-glycerol 1-phosphate.

Belongs to the GGGP/HepGP synthase family. Group II subfamily. As to quaternary structure, homotetramer. Homohexamer. Mg(2+) is required as a cofactor.

It localises to the cytoplasm. The catalysed reaction is sn-glycerol 1-phosphate + (2E,6E,10E)-geranylgeranyl diphosphate = sn-3-O-(geranylgeranyl)glycerol 1-phosphate + diphosphate. It participates in membrane lipid metabolism; glycerophospholipid metabolism. In terms of biological role, prenyltransferase that catalyzes the transfer of the geranylgeranyl moiety of geranylgeranyl diphosphate (GGPP) to the C3 hydroxyl of sn-glycerol-1-phosphate (G1P). This reaction is the first ether-bond-formation step in the biosynthesis of archaeal membrane lipids. The protein is Geranylgeranylglyceryl phosphate synthase of Thermococcus kodakarensis (strain ATCC BAA-918 / JCM 12380 / KOD1) (Pyrococcus kodakaraensis (strain KOD1)).